Reading from the N-terminus, the 171-residue chain is Nicotinamide-nucleotide adenylyltransferase (171 aa).

It belongs to the archaeal NMN adenylyltransferase family.

It is found in the cytoplasm. The catalysed reaction is beta-nicotinamide D-ribonucleotide + ATP + H(+) = diphosphate + NAD(+). The protein operates within cofactor biosynthesis; NAD(+) biosynthesis; NAD(+) from nicotinamide D-ribonucleotide: step 1/1. The polypeptide is Nicotinamide-nucleotide adenylyltransferase (Methanococcus maripaludis (strain DSM 14266 / JCM 13030 / NBRC 101832 / S2 / LL)).